Here is a 317-residue protein sequence, read N- to C-terminus: RHOMBOID-like protein 2 (317 aa).

Transmembrane regions (helical) follow at residues 33–53 (SWLI…VMFV), 118–138 (WLHA…FIGI), 149–169 (VGLI…LFLQ), 172–192 (ISVG…SELL), 202–222 (AAAL…GMLP), 224–244 (VDNF…FVLL), and 272–292 (LFVV…VMLF). Ser-177 functions as the Nucleophile in the catalytic mechanism. His-229 (charge relay system) is an active-site residue.

It belongs to the peptidase S54 family. In terms of tissue distribution, expressed in roots, seedlings, leaves, stems and flowers.

The protein localises to the golgi apparatus membrane. It carries out the reaction Cleaves type-1 transmembrane domains using a catalytic dyad composed of serine and histidine that are contributed by different transmembrane domains.. Rhomboid-type serine protease that catalyzes intramembrane proteolysis. Can cleave the Drosophila proteins Spitz and Keren. May function in pollen elongation. In Arabidopsis thaliana (Mouse-ear cress), this protein is RHOMBOID-like protein 2.